The sequence spans 148 residues: UPF0756 membrane protein ESA_02180 (148 aa).

Helical transmembrane passes span 4–24, 51–71, 86–106, and 112–132; these read ITLL…NMAV, VTVG…SGTL, LVAI…VALM, and IVAG…GVPV.

It belongs to the UPF0756 family.

The protein resides in the cell membrane. The polypeptide is UPF0756 membrane protein ESA_02180 (Cronobacter sakazakii (strain ATCC BAA-894) (Enterobacter sakazakii)).